We begin with the raw amino-acid sequence, 513 residues long: Na(+)/H(+) antiporter NhaB (513 aa).

The next 11 helical transmembrane spans lie at 21 to 41 (LCII…SPFI), 43 to 63 (GWTL…CYPL), 88 to 108 (IIAN…IYFM), 137 to 157 (AAFL…ISVG), 202 to 222 (LLMH…VGEP), 235 to 255 (FIEF…CGIA), 299 to 318 (MAIQ…LHLA), 322 to 344 (IIGL…HAIG), 350 to 370 (PMPF…IVDL), 389 to 409 (LALF…VFVG), and 477 to 497 (MALP…EYLL).

It belongs to the NhaB Na(+)/H(+) (TC 2.A.34) antiporter family.

The protein localises to the cell inner membrane. The catalysed reaction is 2 Na(+)(in) + 3 H(+)(out) = 2 Na(+)(out) + 3 H(+)(in). Functionally, na(+)/H(+) antiporter that extrudes sodium in exchange for external protons. This Haemophilus ducreyi (strain 35000HP / ATCC 700724) protein is Na(+)/H(+) antiporter NhaB.